A 347-amino-acid polypeptide reads, in one-letter code: Chaperone protein DnaJ 1 (347 aa).

The J domain maps to D5–A75. Positions A68–D77 are enriched in low complexity. Residues A68–A91 are disordered. The segment at G107 to A181 adopts a CR-type zinc-finger fold. Residues C120, C123, C137, C140, C155, C158, C169, and C172 each coordinate Zn(2+). 4 CXXCXGXG motif repeats span residues C120 to G127, C137 to G144, C155 to G162, and C169 to G176.

The protein belongs to the DnaJ family. In terms of assembly, homodimer. The cofactor is Zn(2+).

The protein resides in the cytoplasm. Its function is as follows. Participates actively in the response to hyperosmotic and heat shock by preventing the aggregation of stress-denatured proteins and by disaggregating proteins, also in an autonomous, DnaK-independent fashion. Unfolded proteins bind initially to DnaJ; upon interaction with the DnaJ-bound protein, DnaK hydrolyzes its bound ATP, resulting in the formation of a stable complex. GrpE releases ADP from DnaK; ATP binding to DnaK triggers the release of the substrate protein, thus completing the reaction cycle. Several rounds of ATP-dependent interactions between DnaJ, DnaK and GrpE are required for fully efficient folding. Also involved, together with DnaK and GrpE, in the DNA replication of plasmids through activation of initiation proteins. The sequence is that of Chaperone protein DnaJ 1 from Aromatoleum aromaticum (strain DSM 19018 / LMG 30748 / EbN1) (Azoarcus sp. (strain EbN1)).